Reading from the N-terminus, the 123-residue chain is Snaclec echicetin subunit beta (123 aa).

Residues 1–121 (NCLPDWSVYE…SGEFYFVCKC (121 aa)) form the C-type lectin domain. Intrachain disulfides connect Cys-2-Cys-13, Cys-30-Cys-119, and Cys-96-Cys-111.

This sequence belongs to the snaclec family. Heterodimer of subunits alpha and beta; disulfide-linked. Forms an active complex with the pentameric immunoglobuline Mkappa (IgMkappa). In terms of tissue distribution, expressed by the venom gland.

The protein localises to the secreted. Echicetin itself inhibits aggregation of washed platelets induced by vWF, thrombin or alboaggregin-A. However, when complexed with the pentameric plasma immunoglobulin Mkappa (IgMkappa), echicetin binds specifically to GPIb and activates platelets. This is caused by P-selectin expression and activation of alpha-IIb/beta-3 as well as tyrosine phosphorylation of several signal transduction molecules, including p53/56(LYN), p64, p72(SYK), p70 to p90, and p120. In vivo, it induces thrombocytopenia when injected into mice, probably accounting of activation of platelets rather than inhibition. This is Snaclec echicetin subunit beta from Echis carinatus sochureki (Saw-scaled viper).